Consider the following 104-residue polypeptide: Large ribosomal subunit protein bL21 (104 aa).

Belongs to the bacterial ribosomal protein bL21 family. As to quaternary structure, part of the 50S ribosomal subunit. Contacts protein L20.

Functionally, this protein binds to 23S rRNA in the presence of protein L20. The sequence is that of Large ribosomal subunit protein bL21 from Streptococcus pyogenes serotype M1.